The primary structure comprises 392 residues: Phosphoglycerate kinase (392 aa).

Residues 21–23, Arg36, 59–62, Arg117, and Arg150 each bind substrate; these read DFN and HLGR. ATP is bound by residues Lys200, Gly288, Glu319, and 345–348; that span reads GGDS.

It belongs to the phosphoglycerate kinase family. As to quaternary structure, monomer.

Its subcellular location is the cytoplasm. The enzyme catalyses (2R)-3-phosphoglycerate + ATP = (2R)-3-phospho-glyceroyl phosphate + ADP. It functions in the pathway carbohydrate degradation; glycolysis; pyruvate from D-glyceraldehyde 3-phosphate: step 2/5. The polypeptide is Phosphoglycerate kinase (Rubrobacter xylanophilus (strain DSM 9941 / JCM 11954 / NBRC 16129 / PRD-1)).